The sequence spans 544 residues: Chaperonin GroEL (544 aa).

ATP-binding positions include 30 to 33 (TLGP), Lys51, 87 to 91 (DGTTT), Gly415, 479 to 481 (NAA), and Asp495.

It belongs to the chaperonin (HSP60) family. As to quaternary structure, forms a cylinder of 14 subunits composed of two heptameric rings stacked back-to-back. Interacts with the co-chaperonin GroES.

It localises to the cytoplasm. It catalyses the reaction ATP + H2O + a folded polypeptide = ADP + phosphate + an unfolded polypeptide.. Functionally, together with its co-chaperonin GroES, plays an essential role in assisting protein folding. The GroEL-GroES system forms a nano-cage that allows encapsulation of the non-native substrate proteins and provides a physical environment optimized to promote and accelerate protein folding. This is Chaperonin GroEL from Francisella tularensis subsp. tularensis (strain WY96-3418).